The primary structure comprises 464 residues: E3 ubiquitin-protein ligase MYLIP-B (464 aa).

Residues 1–279 (MLCHITRPDS…EIHAFYRCDT (279 aa)) enclose the FERM domain. The RING-type zinc-finger motif lies at 381 to 416 (CALCCEQEISAAFCPCGHMFCCYNCASQLQCCPVCR).

Interacts with anxa5.

Its subcellular location is the cytoplasm. The protein resides in the cytosol. It carries out the reaction S-ubiquitinyl-[E2 ubiquitin-conjugating enzyme]-L-cysteine + [acceptor protein]-L-lysine = [E2 ubiquitin-conjugating enzyme]-L-cysteine + N(6)-ubiquitinyl-[acceptor protein]-L-lysine.. Its pathway is protein modification; protein ubiquitination. Its function is as follows. E3 ubiquitin-protein ligase that mediates ubiquitination and subsequent proteasomal degradation of myosin regulatory light chain (MRLC). Regulates cell movements during gastrulation by acting downstream of fz7 to antagonize the frizzled-signaling pathway. The sequence is that of E3 ubiquitin-protein ligase MYLIP-B from Danio rerio (Zebrafish).